The sequence spans 614 residues: Acetylcholinesterase (614 aa).

The first 31 residues, Met1–Ala31, serve as a signal peptide directing secretion. Cys100 and Cys127 form a disulfide bridge. Trp117 contributes to the galanthamine binding site. Huperzine A is bound at residue Trp117. Gly153 provides a ligand contact to huprine W. Tyr164 contributes to the huperzine A binding site. Glu233 to Ser234 is a galanthamine binding site. Ser234 lines the huprine W pocket. The active-site Acyl-ester intermediate is the Ser234. Residues Cys288 and Cys303 are joined by a disulfide bond. An N-linked (GlcNAc...) asparagine glycan is attached at Asn296. The Charge relay system role is filled by Glu365. Tyr368 contacts galanthamine. Tyr368 lines the huperzine A pocket. Asn381 is a glycosylation site (N-linked (GlcNAc...) asparagine). Cysteines 440 and 560 form a disulfide. 2 residues coordinate huprine W: Trp470 and His478. His478 (charge relay system) is an active-site residue. A glycan (N-linked (GlcNAc...) asparagine) is linked at Asn495. Phe588 carries GPI-anchor amidated glycine lipidation.

It belongs to the type-B carboxylesterase/lipase family. Interacts with PRIMA1. The interaction with PRIMA1 is required to anchor it to the basal lamina of cells and organize into tetramers. Isoform H generates GPI-anchored dimers; disulfide linked. Isoform T generates multiple structures, ranging from monomers and dimers to collagen-tailed and hydrophobic-tailed forms, in which catalytic tetramers are associated with anchoring proteins that attach them to the basal lamina or to cell membranes. In the collagen-tailed forms, isoform T subunits are associated with a specific collagen, COLQ, which triggers the formation of isoform T tetramers, from monomers and dimers. Isoform R may be monomeric. In terms of tissue distribution, isoform H is highly expressed in erythrocytes.

The protein localises to the synapse. The protein resides in the secreted. Its subcellular location is the cell membrane. It localises to the nucleus. The enzyme catalyses acetylcholine + H2O = choline + acetate + H(+). Its function is as follows. Hydrolyzes rapidly the acetylcholine neurotransmitter released into the synaptic cleft allowing to terminate the signal transduction at the neuromuscular junction. Role in neuronal apoptosis. In Homo sapiens (Human), this protein is Acetylcholinesterase.